The chain runs to 310 residues: Protoheme IX farnesyltransferase 2 (310 aa).

9 helical membrane passes run 25–45 (PGII…AAKG), 49–69 (LVLM…GCAI), 98–118 (HVLL…ALFT), 121–141 (LALL…SLYM), 145–165 (SVYG…VGYC), 176–196 (VILL…IAIF), 222–242 (IVLY…AGYT), 245–265 (AFMA…LKGY), and 277–297 (QVFG…ALDF).

This sequence belongs to the UbiA prenyltransferase family. Protoheme IX farnesyltransferase subfamily.

The protein localises to the cell inner membrane. The catalysed reaction is heme b + (2E,6E)-farnesyl diphosphate + H2O = Fe(II)-heme o + diphosphate. Its pathway is porphyrin-containing compound metabolism; heme O biosynthesis; heme O from protoheme: step 1/1. Functionally, converts heme B (protoheme IX) to heme O by substitution of the vinyl group on carbon 2 of heme B porphyrin ring with a hydroxyethyl farnesyl side group. In Shewanella sp. (strain MR-7), this protein is Protoheme IX farnesyltransferase 2.